Consider the following 182-residue polypeptide: Adenine phosphoribosyltransferase (182 aa).

This sequence belongs to the purine/pyrimidine phosphoribosyltransferase family. Homodimer.

It is found in the cytoplasm. It catalyses the reaction AMP + diphosphate = 5-phospho-alpha-D-ribose 1-diphosphate + adenine. It participates in purine metabolism; AMP biosynthesis via salvage pathway; AMP from adenine: step 1/1. Its function is as follows. Catalyzes a salvage reaction resulting in the formation of AMP, that is energically less costly than de novo synthesis. This Renibacterium salmoninarum (strain ATCC 33209 / DSM 20767 / JCM 11484 / NBRC 15589 / NCIMB 2235) protein is Adenine phosphoribosyltransferase.